Reading from the N-terminus, the 970-residue chain is ATP-dependent DNA helicase DDX11 (970 aa).

Positions G9–L445 constitute a Helicase ATP-binding domain. S44 to S51 contacts ATP. S262 is subject to Phosphoserine. Residues C267 and C285 each coordinate [4Fe-4S] cluster. Residues Q289–P304 show a composition bias toward basic and acidic residues. The disordered stretch occupies residues Q289–Q312. Residues C315 and C350 each coordinate [4Fe-4S] cluster. Residues D393–H396 carry the DEAH box motif. The interval T818 to A849 is disordered.

The protein belongs to the DEAD box helicase family. DEAH subfamily. DDX11/CHL1 sub-subfamily. In terms of assembly, associates with the CTF18-RFC complex. Associates with a cohesin complex composed of RAD21, SMC1 proteins and SMC3. Interacts with CHTF18. Interacts with DSCC1. Interacts with FEN1; this interaction is direct and increases flap endonuclease activity of FEN1. Interacts with PCNA. Interacts with POLR1A and UBTF. Interacts with RAD21, SMC1 proteins and SMC3. Interacts with RFC2. Interacts with TIMELESS; this interaction increases recruitment of both proteins onto chromatin in response to replication stress induction by hydroxyurea. As to quaternary structure, (Microbial infection) Interacts with bovine papillomavirus type 1 regulatory protein E2; this interaction stimulates the recruitment of E2 onto mitotic chromosomes. Mg(2+) is required as a cofactor. The cofactor is [4Fe-4S] cluster. In terms of tissue distribution, expressed in melanoma cells. Not detected in epidermal melanocytes of normal skin (at protein level). Highly expressed in spleen, B-cells, thymus, testis, ovary, small intestine and pancreas. Very low expression seen in brain. Expressed in dividing cells and/or cells undergoing high levels of recombination. No expression detected in cells signaled to terminally differentiate. Expressed weakly in keratinocytes.

The protein resides in the nucleus. Its subcellular location is the nucleolus. The protein localises to the cytoplasm. It localises to the cytoskeleton. It is found in the spindle pole. The protein resides in the midbody. Its subcellular location is the microtubule organizing center. The protein localises to the centrosome. It localises to the chromosome. The catalysed reaction is Couples ATP hydrolysis with the unwinding of duplex DNA at the replication fork by translocating in the 5'-3' direction. This creates two antiparallel DNA single strands (ssDNA). The leading ssDNA polymer is the template for DNA polymerase III holoenzyme which synthesizes a continuous strand.. It carries out the reaction ATP + H2O = ADP + phosphate + H(+). Its activity is regulated as follows. ATPase activity is stimulated by high magnesium salt levels (up to a 0.1 M), and potassium salts (glutamate, chloride or acetate) are more effective than the corresponding sodium salts. ATPase activity is enhanced by the long non-coding RNA (lncRNA) cohesion regulator noncoding RNA (CONCR). Double-stranded DNA helicase activity is maximal with magnesium ions at low concentrations (0.5-1 mM) whereas is markedly inhibited at higher levels (5 mM and above). Double-stranded DNA helicase activity is stimulated by 25-50 mM potassium acetate, stimulated to a lesser extent by 25 mM of ammonium acetate, and markedly inhibited by sodium acetate. In terms of biological role, DNA-dependent ATPase and ATP-dependent DNA helicase that participates in various functions in genomic stability, including DNA replication, DNA repair and heterochromatin organization as well as in ribosomal RNA synthesis. Its double-stranded DNA helicase activity requires either a minimal 5'-single-stranded tail length of approximately 15 nt (flap substrates) or 10 nt length single-stranded gapped DNA substrates of a partial duplex DNA structure for helicase loading and translocation along DNA in a 5' to 3' direction. The helicase activity is capable of displacing duplex regions up to 100 bp, which can be extended up to 500 bp by the replication protein A (RPA) or the cohesion CTF18-replication factor C (Ctf18-RFC) complex activities. Also shows ATPase- and helicase activities on substrates that mimic key DNA intermediates of replication, repair and homologous recombination reactions, including forked duplex, anti-parallel G-quadruplex and three-stranded D-loop DNA molecules. Plays a role in DNA double-strand break (DSB) repair at the DNA replication fork during DNA replication recovery from DNA damage. Recruited with TIMELESS factor upon DNA-replication stress response at DNA replication fork to preserve replication fork progression, and hence ensure DNA replication fidelity. Also cooperates with TIMELESS factor during DNA replication to regulate proper sister chromatid cohesion and mitotic chromosome segregation. Stimulates 5'-single-stranded DNA flap endonuclease activity of FEN1 in an ATP- and helicase-independent manner; and hence it may contribute in Okazaki fragment processing at DNA replication fork during lagging strand DNA synthesis. Its ability to function at DNA replication fork is modulated by its binding to long non-coding RNA (lncRNA) cohesion regulator non-coding RNA DDX11-AS1/CONCR, which is able to increase both DDX11 ATPase activity and binding to DNA replicating regions. Also plays a role in heterochromatin organization. Involved in rRNA transcription activation through binding to active hypomethylated rDNA gene loci by recruiting UBTF and the RNA polymerase Pol I transcriptional machinery. Plays a role in embryonic development and prevention of aneuploidy. Involved in melanoma cell proliferation and survival. Associates with chromatin at DNA replication fork regions. Binds to single- and double-stranded DNAs. Its function is as follows. (Microbial infection) Required for bovine papillomavirus type 1 regulatory protein E2 loading onto mitotic chromosomes during DNA replication for the viral genome to be maintained and segregated. The polypeptide is ATP-dependent DNA helicase DDX11 (Homo sapiens (Human)).